We begin with the raw amino-acid sequence, 294 residues long: Fatty acyl-CoA reductase Rv0547c (294 aa).

Serine 49, serine 50, isoleucine 52, arginine 72, aspartate 97, leucine 98, asparagine 124, tyrosine 192, lysine 196, valine 225, and threonine 227 together coordinate NADP(+). The active-site Proton acceptor is the tyrosine 192.

This sequence belongs to the short-chain dehydrogenases/reductases (SDR) family.

The protein resides in the host mitochondrion. The enzyme catalyses hexadecanal + NADP(+) + CoA = hexadecanoyl-CoA + NADPH + H(+). Oxidoreductase that promotes the persistence of M.tuberculosis in host macrophages by reprogramming the fatty acid metabolism in host mitochondria. When localized in the host mitochondria, it potentially acts on unknown lipid substrates and converts them into products that directly or indirectly alter the lipid profile of the mitochondria. This change in lipid profile results in increased mitochondrial membrane fluidity, enhanced endogenous fatty acid oxidation and increased mitochondrial spare respiratory capacity. All these events eventually favor M.tuberculosis persistence in the host macrophages. In vitro, can catalyze the NADPH-dependent reduction of palmitoyl-CoA (hexadecanoyl-CoA). In Mycobacterium tuberculosis (strain ATCC 25618 / H37Rv), this protein is Fatty acyl-CoA reductase Rv0547c.